A 440-amino-acid chain; its full sequence is UDP-N-acetylglucosamine 1-carboxyvinyltransferase 1 (440 aa).

Lys-22–Asn-23 provides a ligand contact to phosphoenolpyruvate. Arg-93 lines the UDP-N-acetyl-alpha-D-glucosamine pocket. The active-site Proton donor is Cys-117. Cys-117 carries the 2-(S-cysteinyl)pyruvic acid O-phosphothioketal modification. Residues Arg-122–Gln-126, Asp-306, and Val-328 contribute to the UDP-N-acetyl-alpha-D-glucosamine site.

Belongs to the EPSP synthase family. MurA subfamily.

The protein resides in the cytoplasm. It carries out the reaction phosphoenolpyruvate + UDP-N-acetyl-alpha-D-glucosamine = UDP-N-acetyl-3-O-(1-carboxyvinyl)-alpha-D-glucosamine + phosphate. Its pathway is cell wall biogenesis; peptidoglycan biosynthesis. Its function is as follows. Cell wall formation. Adds enolpyruvyl to UDP-N-acetylglucosamine. This is UDP-N-acetylglucosamine 1-carboxyvinyltransferase 1 from Halalkalibacterium halodurans (strain ATCC BAA-125 / DSM 18197 / FERM 7344 / JCM 9153 / C-125) (Bacillus halodurans).